The sequence spans 209 residues: Small ribosomal subunit protein uS4 (209 aa).

In terms of domain architecture, S4 RNA-binding spans 99-162; it reads RRLDNMVYRL…RKNNKIIEAM (64 aa).

Belongs to the universal ribosomal protein uS4 family. As to quaternary structure, part of the 30S ribosomal subunit. Contacts protein S5. The interaction surface between S4 and S5 is involved in control of translational fidelity.

In terms of biological role, one of the primary rRNA binding proteins, it binds directly to 16S rRNA where it nucleates assembly of the body of the 30S subunit. Functionally, with S5 and S12 plays an important role in translational accuracy. The polypeptide is Small ribosomal subunit protein uS4 (Syntrophus aciditrophicus (strain SB)).